The chain runs to 456 residues: Bifunctional protein GlmU (456 aa).

The interval 1–229 is pyrophosphorylase; the sequence is MLNVVILAAG…GWETLGVNSR (229 aa). UDP-N-acetyl-alpha-D-glucosamine contacts are provided by residues 7–10, Lys-21, Gln-73, 78–79, 103–105, Gly-139, Glu-154, Asn-169, and Asn-227; these read LAAG, GT, and YGD. Asp-105 contributes to the Mg(2+) binding site. Asn-227 provides a ligand contact to Mg(2+). Residues 230-250 form a linker region; that stretch reads VQQAELERRWQQEQARRQLEA. The interval 251 to 456 is N-acetyltransferase; it reads GVTLADPARF…EGWQRPQKKS (206 aa). Arg-333 and Lys-351 together coordinate UDP-N-acetyl-alpha-D-glucosamine. His-363 (proton acceptor) is an active-site residue. UDP-N-acetyl-alpha-D-glucosamine-binding residues include Tyr-366 and Asn-377. Residues Ala-380, 386-387, Ser-405, Ala-423, and Arg-440 contribute to the acetyl-CoA site; that span reads NY.

The protein in the N-terminal section; belongs to the N-acetylglucosamine-1-phosphate uridyltransferase family. It in the C-terminal section; belongs to the transferase hexapeptide repeat family. In terms of assembly, homotrimer. It depends on Mg(2+) as a cofactor.

It localises to the cytoplasm. It catalyses the reaction alpha-D-glucosamine 1-phosphate + acetyl-CoA = N-acetyl-alpha-D-glucosamine 1-phosphate + CoA + H(+). It carries out the reaction N-acetyl-alpha-D-glucosamine 1-phosphate + UTP + H(+) = UDP-N-acetyl-alpha-D-glucosamine + diphosphate. It functions in the pathway nucleotide-sugar biosynthesis; UDP-N-acetyl-alpha-D-glucosamine biosynthesis; N-acetyl-alpha-D-glucosamine 1-phosphate from alpha-D-glucosamine 6-phosphate (route II): step 2/2. Its pathway is nucleotide-sugar biosynthesis; UDP-N-acetyl-alpha-D-glucosamine biosynthesis; UDP-N-acetyl-alpha-D-glucosamine from N-acetyl-alpha-D-glucosamine 1-phosphate: step 1/1. It participates in bacterial outer membrane biogenesis; LPS lipid A biosynthesis. Its function is as follows. Catalyzes the last two sequential reactions in the de novo biosynthetic pathway for UDP-N-acetylglucosamine (UDP-GlcNAc). The C-terminal domain catalyzes the transfer of acetyl group from acetyl coenzyme A to glucosamine-1-phosphate (GlcN-1-P) to produce N-acetylglucosamine-1-phosphate (GlcNAc-1-P), which is converted into UDP-GlcNAc by the transfer of uridine 5-monophosphate (from uridine 5-triphosphate), a reaction catalyzed by the N-terminal domain. The polypeptide is Bifunctional protein GlmU (Bordetella petrii (strain ATCC BAA-461 / DSM 12804 / CCUG 43448)).